The sequence spans 682 residues: Methionine--tRNA ligase (682 aa).

The short motif at 12–22 (PYANGAIHLGH) is the 'HIGH' region element. Zn(2+)-binding residues include cysteine 143, cysteine 146, cysteine 156, and cysteine 159. The 'KMSKS' region signature appears at 328–332 (KMSKS). Lysine 331 contacts ATP. The tRNA-binding domain maps to 580 to 682 (DFAKLDLRVA…EGIRPGMQVK (103 aa)).

The protein belongs to the class-I aminoacyl-tRNA synthetase family. MetG type 1 subfamily. As to quaternary structure, homodimer. Zn(2+) serves as cofactor.

The protein localises to the cytoplasm. It catalyses the reaction tRNA(Met) + L-methionine + ATP = L-methionyl-tRNA(Met) + AMP + diphosphate. Functionally, is required not only for elongation of protein synthesis but also for the initiation of all mRNA translation through initiator tRNA(fMet) aminoacylation. This chain is Methionine--tRNA ligase, found in Actinobacillus pleuropneumoniae serotype 7 (strain AP76).